The following is an 86-amino-acid chain: Serine protease inhibitor Kazal-type 4 (86 aa).

The first 26 residues, 1–26 (MAVRLWVVALALAALFIVDREVPVSA), serve as a signal peptide directing secretion. The region spanning 31–86 (FSRMPICEHMTESPDCSRIYDPVCGTDGVTYESECKLCLARIENKQDIQIVKDGEC) is the Kazal-like domain. 3 disulfide bridges follow: Cys-37–Cys-68, Cys-46–Cys-65, and Cys-54–Cys-86.

Synthesized in duodenal goblet cells and in monocytes in bone marrow and blood.

It localises to the secreted. Functionally, inhibits the glucose-induced insulin secretion from perfused pancreas; also plays a role in the immune system. Does not inhibit trypsin. This Sus scrofa (Pig) protein is Serine protease inhibitor Kazal-type 4 (SPINK4).